A 725-amino-acid polypeptide reads, in one-letter code: Probable alpha-galactosidase G (725 aa).

An N-linked (GlcNAc...) asparagine glycan is attached at Asn407. The active-site Nucleophile is the Asp484. A glycan (N-linked (GlcNAc...) asparagine) is linked at Asn490. Residue Asp546 is the Proton donor of the active site. Asn672 carries N-linked (GlcNAc...) asparagine glycosylation.

The protein belongs to the glycosyl hydrolase 36 family. As to quaternary structure, homotetramer. Mg(2+) is required as a cofactor. It depends on NAD(+) as a cofactor.

It is found in the secreted. The catalysed reaction is Hydrolysis of terminal, non-reducing alpha-D-galactose residues in alpha-D-galactosides, including galactose oligosaccharides, galactomannans and galactolipids.. Hydrolyzes a variety of simple alpha-D-galactoside as well as more complex molecules such as oligosaccharides and polysaccharides. This chain is Probable alpha-galactosidase G (aglG), found in Aspergillus terreus (strain NIH 2624 / FGSC A1156).